A 118-amino-acid chain; its full sequence is Large ribosomal subunit protein bL20 (118 aa).

Belongs to the bacterial ribosomal protein bL20 family.

Functionally, binds directly to 23S ribosomal RNA and is necessary for the in vitro assembly process of the 50S ribosomal subunit. It is not involved in the protein synthesizing functions of that subunit. The sequence is that of Large ribosomal subunit protein bL20 from Azotobacter vinelandii (strain DJ / ATCC BAA-1303).